The following is a 438-amino-acid chain: Trigger factor (438 aa).

One can recognise a PPIase FKBP-type domain in the interval Gly163–Ala248.

It belongs to the FKBP-type PPIase family. Tig subfamily.

Its subcellular location is the cytoplasm. The catalysed reaction is [protein]-peptidylproline (omega=180) = [protein]-peptidylproline (omega=0). Its function is as follows. Involved in protein export. Acts as a chaperone by maintaining the newly synthesized protein in an open conformation. Functions as a peptidyl-prolyl cis-trans isomerase. The polypeptide is Trigger factor (Pelotomaculum thermopropionicum (strain DSM 13744 / JCM 10971 / SI)).